The sequence spans 219 residues: Cell division protein B2 (219 aa).

Functionally, part of a cell division machinery. The protein is Cell division protein B2 of Sulfolobus acidocaldarius (strain ATCC 33909 / DSM 639 / JCM 8929 / NBRC 15157 / NCIMB 11770).